The primary structure comprises 308 residues: 1D-myo-inositol 2-acetamido-2-deoxy-alpha-D-glucopyranoside deacetylase (308 aa).

Zn(2+)-binding residues include His18, Asp21, and His153.

This sequence belongs to the MshB deacetylase family. Zn(2+) serves as cofactor.

It catalyses the reaction 1D-myo-inositol 2-acetamido-2-deoxy-alpha-D-glucopyranoside + H2O = 1D-myo-inositol 2-amino-2-deoxy-alpha-D-glucopyranoside + acetate. Its function is as follows. Catalyzes the deacetylation of 1D-myo-inositol 2-acetamido-2-deoxy-alpha-D-glucopyranoside (GlcNAc-Ins) in the mycothiol biosynthesis pathway. This is 1D-myo-inositol 2-acetamido-2-deoxy-alpha-D-glucopyranoside deacetylase from Salinispora arenicola (strain CNS-205).